The primary structure comprises 96 residues: ATP-dependent Clp protease adapter protein ClpS (96 aa).

The protein belongs to the ClpS family. In terms of assembly, binds to the N-terminal domain of the chaperone ClpA.

Involved in the modulation of the specificity of the ClpAP-mediated ATP-dependent protein degradation. This chain is ATP-dependent Clp protease adapter protein ClpS, found in Campylobacter jejuni subsp. jejuni serotype O:2 (strain ATCC 700819 / NCTC 11168).